A 644-amino-acid chain; its full sequence is 1,4-alpha-glucan branching enzyme GlgB (644 aa).

D309 acts as the Nucleophile in catalysis. E362 acts as the Proton donor in catalysis.

This sequence belongs to the glycosyl hydrolase 13 family. GlgB subfamily. Monomer.

It carries out the reaction Transfers a segment of a (1-&gt;4)-alpha-D-glucan chain to a primary hydroxy group in a similar glucan chain.. It participates in glycan biosynthesis; glycogen biosynthesis. Its function is as follows. Catalyzes the formation of the alpha-1,6-glucosidic linkages in glycogen by scission of a 1,4-alpha-linked oligosaccharide from growing alpha-1,4-glucan chains and the subsequent attachment of the oligosaccharide to the alpha-1,6 position. The chain is 1,4-alpha-glucan branching enzyme GlgB from Cutibacterium acnes (strain DSM 16379 / KPA171202) (Propionibacterium acnes).